The primary structure comprises 173 residues: Superoxide dismutase [Cu-Zn] (173 aa).

The N-terminal stretch at 1–19 (MKRFSLAILALVVATGAQA) is a signal peptide. Residues histidine 67, histidine 69, and histidine 92 each coordinate Cu cation. Residues 72 to 113 (GSCQPATKDGKASAAESAGGHLDPQNTGKHEGPEGAGHLGDL) are disordered. Cysteine 74 and cysteine 169 are disulfide-bonded. Zn(2+) contacts are provided by histidine 92, histidine 101, histidine 109, and aspartate 112. Histidine 147 lines the Cu cation pocket.

This sequence belongs to the Cu-Zn superoxide dismutase family. Monomer. Requires Cu cation as cofactor. The cofactor is Zn(2+).

The protein localises to the periplasm. The catalysed reaction is 2 superoxide + 2 H(+) = H2O2 + O2. Functionally, destroys radicals which are normally produced within the cells and which are toxic to biological systems. The polypeptide is Superoxide dismutase [Cu-Zn] (sodC) (Escherichia coli O157:H7).